We begin with the raw amino-acid sequence, 130 residues long: uncharacterized protein (130 aa).

The protein belongs to the HesB/IscA family.

This is an uncharacterized protein from Buchnera aphidicola subsp. Acyrthosiphon pisum (strain APS) (Acyrthosiphon pisum symbiotic bacterium).